We begin with the raw amino-acid sequence, 97 residues long: Osteocalcin (97 aa).

The first 20 residues, 1–20 (MKAAALLLLAALLTFSLCRS), serve as a signal peptide directing secretion. The propeptide occupies 21-48 (APDGSDARSAKAFISHRQRAEMVRRQKR). The Gla domain occupies 49–95 (HYAQDSGVAGAPPNPLEAQREVCELSPDCDELADQIGFQEAYRRFYG). Ca(2+)-binding residues include E65, E69, E72, and D78. 4-carboxyglutamate is present on residues E65, E69, and E72. An intrachain disulfide couples C71 to C77.

Belongs to the osteocalcin/matrix Gla protein family. In terms of processing, gamma-carboxyglutamate residues are formed by vitamin K dependent carboxylation by GGCX. These residues are essential for the binding of calcium.

The protein resides in the secreted. Its function is as follows. The carboxylated form is one of the main organic components of the bone matrix, which constitutes 1-2% of the total bone protein. The carboxylated form binds strongly to apatite and calcium. The sequence is that of Osteocalcin (BGLAP) from Gallus gallus (Chicken).